The chain runs to 119 residues: Small ribosomal subunit protein uS10 (119 aa).

Residue Ala2 is modified to N-acetylalanine. A Glycyl lysine isopeptide (Lys-Gly) (interchain with G-Cter in ubiquitin) cross-link involves residue Lys4. Lys8 carries the post-translational modification N6-succinyllysine; alternate. Lys8 participates in a covalent cross-link: Glycyl lysine isopeptide (Lys-Gly) (interchain with G-Cter in ubiquitin); alternate. Thr9 bears the Phosphothreonine mark. 2 positions are modified to N6-acetyllysine: Lys34 and Lys75. Ser93 carries the post-translational modification Phosphoserine.

Belongs to the universal ribosomal protein uS10 family. Component of the 40S small ribosomal subunit. In terms of processing, polyubiquitinated by ZNF598 via 'Lys-63'-linked ubiquitin chains when a ribosome has stalled, initiating the ribosome quality control (RQC) pathway to degrade the potentially detrimental aberrant nascent polypeptide. Deubiquitinated by OTUD3 and USP21, antagonizing ZNF598 activity. Post-translationally, ufmylated by UFL1.

Its subcellular location is the cytoplasm. In terms of biological role, component of the small ribosomal subunit. The ribosome is a large ribonucleoprotein complex responsible for the synthesis of proteins in the cell. This chain is Small ribosomal subunit protein uS10 (RPS20), found in Pongo abelii (Sumatran orangutan).